The following is a 484-amino-acid chain: MALELILVLSSLIVILIIFFSFKSNGKSENKLAKLPPGQMGWPFIGQTIPFMQPHSSASLGLFMDQNIAKYGRIFRTNLLAKPTIVSADPDFNRYILQNEGRLFENSCPTSIKEIMGPWSMLALAGDIHREMRSIAVNFMSNVKLRTYFLPDIEQQAIKVLASWENTPEAFSAQEQGKKFAFNLMVKHLMSMDPGMPETEKLRTEYHAFMKGMASIPLNLPGTAYRKALQSRSIILKIMGQKLDERIRQVRDGCEGLEQDDLLASVSKHPHLTKEQILDLILSMLFAGHETSSAAIALAIYFLDSCPKAAQQLREEHVEIARQKAERGETGLNWDDYKQMEFTHCVINETLRLGNIVKFLHRKTLKDVQFKGYDIPCGWEVVTIISAAHLDPSVYDEPQRYNPWRWQNISATASKNNSIMSFSGGPRLCPGAELAKLEMAVFLHHLVRKFHWELAEHDYPVSFPFLGFPKGLPIKVRPLEKSEA.

A helical transmembrane segment spans residues 2–22 (ALELILVLSSLIVILIIFFSF). Cysteine 429 contacts heme.

It belongs to the cytochrome P450 family. In terms of tissue distribution, expressed in roots.

It is found in the membrane. The enzyme catalyses cholesterol + reduced [NADPH--hemoprotein reductase] + O2 = (22R)-hydroxycholesterol + oxidized [NADPH--hemoprotein reductase] + H2O + H(+). The protein operates within steroid metabolism; cholesterol metabolism. Involved in the biosynthesis of steroidal saponins and alkaloids natural products from cholesterol such as spirostane-type saponins and polyphyllins, compounds with pharmacological activity. Catalyzes the C-22 hydroxylation of cholesterol to form 22R-hydroxycholesterol. The polypeptide is Cholesterol 22-hydroxylase CYP90B27 (Paris polyphylla (Daiswa polyphylla)).